The chain runs to 595 residues: Arginine--tRNA ligase (595 aa).

Residues 132 to 142 carry the 'HIGH' region motif; sequence ANPTGPLHVGH.

This sequence belongs to the class-I aminoacyl-tRNA synthetase family. As to quaternary structure, monomer.

The protein resides in the cytoplasm. It carries out the reaction tRNA(Arg) + L-arginine + ATP = L-arginyl-tRNA(Arg) + AMP + diphosphate. This is Arginine--tRNA ligase from Cupriavidus pinatubonensis (strain JMP 134 / LMG 1197) (Cupriavidus necator (strain JMP 134)).